Reading from the N-terminus, the 85-residue chain is Small ribosomal subunit protein uS17 (85 aa).

Belongs to the universal ribosomal protein uS17 family. As to quaternary structure, part of the 30S ribosomal subunit.

In terms of biological role, one of the primary rRNA binding proteins, it binds specifically to the 5'-end of 16S ribosomal RNA. The protein is Small ribosomal subunit protein uS17 of Actinobacillus succinogenes (strain ATCC 55618 / DSM 22257 / CCUG 43843 / 130Z).